A 150-amino-acid chain; its full sequence is uncharacterized protein (150 aa).

The HTH marR-type domain maps to 1–133; that stretch reads MNDILREIGM…ISALLHRVRK (133 aa). Residues 47 to 70 constitute a DNA-binding region (H-T-H motif); sequence QEKLAEMIKVDRTTAARAIKKLEM.

This is an uncharacterized protein from Bacillus subtilis (strain 168).